Consider the following 334-residue polypeptide: 4-hydroxyproline 2-epimerase (334 aa).

The active-site Proton acceptor is Cys91. Residues 92 to 93, His224, and Asp250 each bind substrate; that span reads GH. Cys254 functions as the Proton donor in the catalytic mechanism. 255-256 lines the substrate pocket; that stretch reads GT.

This sequence belongs to the proline racemase family.

The catalysed reaction is trans-4-hydroxy-L-proline = cis-4-hydroxy-D-proline. Catalyzes the epimerization of trans-4-hydroxy-L-proline (t4LHyp) to cis-4-hydroxy-D-proline (c4DHyp). Is likely involved in a degradation pathway that converts t4LHyp to alpha-ketoglutarate. Displays no proline racemase activity. The polypeptide is 4-hydroxyproline 2-epimerase (Spirosoma linguale (strain ATCC 33905 / DSM 74 / LMG 10896 / Claus 1)).